Here is a 185-residue protein sequence, read N- to C-terminus: Peptidyl-tRNA hydrolase (185 aa).

Tyrosine 14 serves as a coordination point for tRNA. The active-site Proton acceptor is the histidine 19. TRNA-binding residues include tyrosine 65, asparagine 67, and asparagine 113.

The protein belongs to the PTH family. As to quaternary structure, monomer.

It localises to the cytoplasm. It catalyses the reaction an N-acyl-L-alpha-aminoacyl-tRNA + H2O = an N-acyl-L-amino acid + a tRNA + H(+). Functionally, hydrolyzes ribosome-free peptidyl-tRNAs (with 1 or more amino acids incorporated), which drop off the ribosome during protein synthesis, or as a result of ribosome stalling. Catalyzes the release of premature peptidyl moieties from peptidyl-tRNA molecules trapped in stalled 50S ribosomal subunits, and thus maintains levels of free tRNAs and 50S ribosomes. This Rickettsia typhi (strain ATCC VR-144 / Wilmington) protein is Peptidyl-tRNA hydrolase.